Reading from the N-terminus, the 452-residue chain is Chaperone SurA (452 aa).

Positions 1–28 (MKKTLRFAAVVSSLAAASALLAAAPAAA) are cleaved as a signal peptide. PpiC domains are found at residues 186–288 (QQDL…RLVD) and 302–400 (IVQT…QVLS).

It is found in the periplasm. It carries out the reaction [protein]-peptidylproline (omega=180) = [protein]-peptidylproline (omega=0). In terms of biological role, chaperone involved in the correct folding and assembly of outer membrane proteins. Recognizes specific patterns of aromatic residues and the orientation of their side chains, which are found more frequently in integral outer membrane proteins. May act in both early periplasmic and late outer membrane-associated steps of protein maturation. This chain is Chaperone SurA, found in Burkholderia lata (strain ATCC 17760 / DSM 23089 / LMG 22485 / NCIMB 9086 / R18194 / 383).